A 192-amino-acid chain; its full sequence is dTTP/UTP pyrophosphatase (192 aa).

D68 (proton acceptor) is an active-site residue.

The protein belongs to the Maf family. YhdE subfamily. A divalent metal cation is required as a cofactor.

Its subcellular location is the cytoplasm. It carries out the reaction dTTP + H2O = dTMP + diphosphate + H(+). The enzyme catalyses UTP + H2O = UMP + diphosphate + H(+). In terms of biological role, nucleoside triphosphate pyrophosphatase that hydrolyzes dTTP and UTP. May have a dual role in cell division arrest and in preventing the incorporation of modified nucleotides into cellular nucleic acids. The chain is dTTP/UTP pyrophosphatase from Cereibacter sphaeroides (strain ATCC 17023 / DSM 158 / JCM 6121 / CCUG 31486 / LMG 2827 / NBRC 12203 / NCIMB 8253 / ATH 2.4.1.) (Rhodobacter sphaeroides).